Here is a 156-residue protein sequence, read N- to C-terminus: Small ribosomal subunit protein uS7 (156 aa).

It belongs to the universal ribosomal protein uS7 family. In terms of assembly, part of the 30S ribosomal subunit. Contacts proteins S9 and S11.

In terms of biological role, one of the primary rRNA binding proteins, it binds directly to 16S rRNA where it nucleates assembly of the head domain of the 30S subunit. Is located at the subunit interface close to the decoding center, probably blocks exit of the E-site tRNA. The polypeptide is Small ribosomal subunit protein uS7 (Shewanella halifaxensis (strain HAW-EB4)).